A 208-amino-acid chain; its full sequence is LexA repressor (208 aa).

Residues 28-48 constitute a DNA-binding region (H-T-H motif); the sequence is RAEIARQLGFRSANAAEEHLK. Active-site for autocatalytic cleavage activity residues include S125 and K162.

This sequence belongs to the peptidase S24 family. As to quaternary structure, homodimer.

The catalysed reaction is Hydrolysis of Ala-|-Gly bond in repressor LexA.. In terms of biological role, represses a number of genes involved in the response to DNA damage (SOS response), including recA and lexA. In the presence of single-stranded DNA, RecA interacts with LexA causing an autocatalytic cleavage which disrupts the DNA-binding part of LexA, leading to derepression of the SOS regulon and eventually DNA repair. This chain is LexA repressor, found in Alteromonas mediterranea (strain DSM 17117 / CIP 110805 / LMG 28347 / Deep ecotype).